Here is a 205-residue protein sequence, read N- to C-terminus: Small ribosomal subunit protein uS4 (205 aa).

Over residues 1–16 (MSKRESSKYKIDRRMG) the composition is skewed to basic and acidic residues. The segment at 1–46 (MSKRESSKYKIDRRMGENIWGRPKSPVNRREYGPGQHGQRRKSKLS) is disordered. The region spanning 94–157 (SRLDAIVYRA…KQLVSVLESV (64 aa)) is the S4 RNA-binding domain.

It belongs to the universal ribosomal protein uS4 family. In terms of assembly, part of the 30S ribosomal subunit. Contacts protein S5. The interaction surface between S4 and S5 is involved in control of translational fidelity.

Functionally, one of the primary rRNA binding proteins, it binds directly to 16S rRNA where it nucleates assembly of the body of the 30S subunit. Its function is as follows. With S5 and S12 plays an important role in translational accuracy. The chain is Small ribosomal subunit protein uS4 from Sinorhizobium fredii (strain NBRC 101917 / NGR234).